A 222-amino-acid polypeptide reads, in one-letter code: Deoxyribose-phosphate aldolase (222 aa).

Aspartate 89 serves as the catalytic Proton donor/acceptor. The Schiff-base intermediate with acetaldehyde role is filled by lysine 152. The active-site Proton donor/acceptor is the lysine 181.

This sequence belongs to the DeoC/FbaB aldolase family. DeoC type 1 subfamily.

The protein localises to the cytoplasm. It catalyses the reaction 2-deoxy-D-ribose 5-phosphate = D-glyceraldehyde 3-phosphate + acetaldehyde. It participates in carbohydrate degradation; 2-deoxy-D-ribose 1-phosphate degradation; D-glyceraldehyde 3-phosphate and acetaldehyde from 2-deoxy-alpha-D-ribose 1-phosphate: step 2/2. Functionally, catalyzes a reversible aldol reaction between acetaldehyde and D-glyceraldehyde 3-phosphate to generate 2-deoxy-D-ribose 5-phosphate. The polypeptide is Deoxyribose-phosphate aldolase (Alkaliphilus oremlandii (strain OhILAs) (Clostridium oremlandii (strain OhILAs))).